Consider the following 157-residue polypeptide: 6,7-dimethyl-8-ribityllumazine synthase (157 aa).

5-amino-6-(D-ribitylamino)uracil is bound by residues phenylalanine 24, 58–60 (SFE), and 82–84 (AVI). 87–88 (ET) is a (2S)-2-hydroxy-3-oxobutyl phosphate binding site. Histidine 90 serves as the catalytic Proton donor. Phenylalanine 115 lines the 5-amino-6-(D-ribitylamino)uracil pocket. (2S)-2-hydroxy-3-oxobutyl phosphate is bound at residue arginine 129.

Belongs to the DMRL synthase family.

The catalysed reaction is (2S)-2-hydroxy-3-oxobutyl phosphate + 5-amino-6-(D-ribitylamino)uracil = 6,7-dimethyl-8-(1-D-ribityl)lumazine + phosphate + 2 H2O + H(+). Its pathway is cofactor biosynthesis; riboflavin biosynthesis; riboflavin from 2-hydroxy-3-oxobutyl phosphate and 5-amino-6-(D-ribitylamino)uracil: step 1/2. Its function is as follows. Catalyzes the formation of 6,7-dimethyl-8-ribityllumazine by condensation of 5-amino-6-(D-ribitylamino)uracil with 3,4-dihydroxy-2-butanone 4-phosphate. This is the penultimate step in the biosynthesis of riboflavin. This Thermus thermophilus (strain ATCC BAA-163 / DSM 7039 / HB27) protein is 6,7-dimethyl-8-ribityllumazine synthase.